Reading from the N-terminus, the 295-residue chain is Shikimate dehydrogenase (NADP(+)) (295 aa).

Shikimate-binding positions include 21–23 (SLS) and Thr-68. Lys-72 serves as the catalytic Proton acceptor. Residues Asn-93 and Asp-108 each coordinate shikimate. NADP(+) contacts are provided by residues 132–136 (GAGGA), 156–161 (NRTPER), and Leu-228. Position 230 (Tyr-230) interacts with shikimate. An NADP(+)-binding site is contributed by Gly-251.

The protein belongs to the shikimate dehydrogenase family. Homodimer.

It catalyses the reaction shikimate + NADP(+) = 3-dehydroshikimate + NADPH + H(+). The protein operates within metabolic intermediate biosynthesis; chorismate biosynthesis; chorismate from D-erythrose 4-phosphate and phosphoenolpyruvate: step 4/7. Its function is as follows. Involved in the biosynthesis of the chorismate, which leads to the biosynthesis of aromatic amino acids. Catalyzes the reversible NADPH linked reduction of 3-dehydroshikimate (DHSA) to yield shikimate (SA). The chain is Shikimate dehydrogenase (NADP(+)) from Moorella thermoacetica (strain ATCC 39073 / JCM 9320).